The chain runs to 862 residues: MVSNGHFASAGDDSFATSYEHGVQVVDEDKEFNRNLSKYLAYENVTPAGFNYHLISVFGSQSTGKSTLLNHLFGTHFSVMAETERRQTTKGIWMSKNKRQEPQRENSLPHVQNPNMADNILVMDVEGTDGRERGEDQDFERKSALFALATSEVLIVNIWEHQVGLYQGANMGLLKTVFEVNLQLFLKDKRSSPRSLLFFVIRDFLGTTPLQNLQNTLMQDLQRIWTSLSKPSGLEDSRIEDYFDFEFAALPHKNFQPDKFVAEVKKLTLRFREGHREPSKHNKTEGGIFLPEYHRRIPADGFAVYAEGIWDQIVNNKDLDLPTQQELLAQFRCDEISREVLVAFDEAIVPFETKQAEAAQSGNPEVLGGLGPAMKNARAKTVKGFETEASRYHKRVYQMKKAELEEKVDTRLKALFAGQLAAAHKSGISQFSDAVTAAVKAGQKKGASYDFADIVSKERKLALETFEKDAKATVVDGTSWSNYTQELALYQKDLEKISAQLRKDEMRRLATRVERWVRSRLGESVGLEFNALGSGRGGSGAPETGDKPSEDTIWDRIWSIFVDTVLDAERRFTERASSFDASLEEVDVGLWRLRRKAWGVLRSKIDEEMMEGNLLLKLRENFEDKFRYDAAGVPRIWRPTDDIEGLYTKARESTLTLIPLLSRFRLRETDTPPQLDRWVGYTPSSATPADEEDLAPIGGVDDDGMSLEEEMTMLSESKRQDLTVRFKKAADGVYVEAKRSAIGGMTQIPVYFYILLLALGWNEIVAVLRNPLYFFMLFLCAVGAFVTYQLNLWGPMIKMAEAASHQALEEGKKRLRDFLEPSEAGPHAARYKNSTEEYEMSNVKAPQRTNSGDDDDEDEGSW.

The Cytoplasmic segment spans residues 1–747 (MVSNGHFASA…KRSAIGGMTQ (747 aa)). The region spanning 49-306 (GFNYHLISVF…IPADGFAVYA (258 aa)) is the GB1/RHD3-type G domain. 59–66 (GSQSTGKS) contributes to the GTP binding site. The stretch at 481–507 (SNYTQELALYQKDLEKISAQLRKDEMR) forms a coiled coil. A helical membrane pass occupies residues 748–768 (IPVYFYILLLALGWNEIVAVL). Residues 769–771 (RNP) are Lumenal-facing. The helical transmembrane segment at 772–792 (LYFFMLFLCAVGAFVTYQLNL) threads the bilayer. The Cytoplasmic portion of the chain corresponds to 793 to 862 (WGPMIKMAEA…DDDDEDEGSW (70 aa)). The disordered stretch occupies residues 819–862 (LEPSEAGPHAARYKNSTEEYEMSNVKAPQRTNSGDDDDEDEGSW). The segment covering 852-862 (GDDDDEDEGSW) has biased composition (acidic residues).

This sequence belongs to the TRAFAC class dynamin-like GTPase superfamily. GB1/RHD3 GTPase family. RHD3 subfamily.

It is found in the endoplasmic reticulum membrane. Functionally, cooperates with the reticulon proteins and tubule-shaping DP1 family proteins to generate and maintain the structure of the tubular endoplasmic reticulum network. Has GTPase activity, which is required for its function in ER organization. The polypeptide is Protein SEY1 (Uncinocarpus reesii (strain UAMH 1704)).